The primary structure comprises 226 residues: Glutathione peroxidase 3 (226 aa).

Residues 1 to 24 form the signal peptide; it reads MARILRASCLLSLLLAGFVPPGRG. The active site involves U73. A non-standard amino acid (selenocysteine) is located at residue U73.

It belongs to the glutathione peroxidase family. Homotetramer. Secreted in plasma.

Its subcellular location is the secreted. The enzyme catalyses 2 glutathione + H2O2 = glutathione disulfide + 2 H2O. The catalysed reaction is tert-butyl hydroperoxide + 2 glutathione = tert-butanol + glutathione disulfide + H2O. Its function is as follows. Protects cells and enzymes from oxidative damage, by catalyzing the reduction of hydrogen peroxide, lipid peroxides and organic hydroperoxide, by glutathione. The sequence is that of Glutathione peroxidase 3 from Mus musculus (Mouse).